The following is a 279-amino-acid chain: Oxygen-dependent coproporphyrinogen-III oxidase (279 aa).

Residue S102 coordinates substrate. 2 residues coordinate a divalent metal cation: H106 and H116. Catalysis depends on H116, which acts as the Proton donor. 118–120 serves as a coordination point for substrate; the sequence is NTR. H149 and H179 together coordinate a divalent metal cation. Residues 244–279 form an important for dimerization region; the sequence is YVEFNLLYDRGTKFGLMTDGNVEAILMSLPPEVKFN.

Belongs to the aerobic coproporphyrinogen-III oxidase family. In terms of assembly, homodimer. Requires a divalent metal cation as cofactor.

Its subcellular location is the cytoplasm. It carries out the reaction coproporphyrinogen III + O2 + 2 H(+) = protoporphyrinogen IX + 2 CO2 + 2 H2O. Its pathway is porphyrin-containing compound metabolism; protoporphyrin-IX biosynthesis; protoporphyrinogen-IX from coproporphyrinogen-III (O2 route): step 1/1. In terms of biological role, involved in the heme biosynthesis. Catalyzes the aerobic oxidative decarboxylation of propionate groups of rings A and B of coproporphyrinogen-III to yield the vinyl groups in protoporphyrinogen-IX. The protein is Oxygen-dependent coproporphyrinogen-III oxidase of Rickettsia peacockii (strain Rustic).